The following is a 324-amino-acid chain: [Acyl-carrier-protein] phosphodiesterase PptH (324 aa).

Residues aspartate 22, histidine 24, and aspartate 51 each coordinate Mn(2+). Fe cation contacts are provided by aspartate 51, asparagine 79, histidine 205, and histidine 246. Histidine 248 contributes to the Mn(2+) binding site.

Belongs to the metallophosphoesterase superfamily. Fe(3+) serves as cofactor. The cofactor is Mn(2+).

It catalyses the reaction holo-[ACP] + H2O = apo-[ACP] + (R)-4'-phosphopantetheine + H(+). Functionally, catalyzes the hydrolysis of the phosphopantetheine group from substrate holo-carrier proteins. The protein is [Acyl-carrier-protein] phosphodiesterase PptH of Mycobacterium tuberculosis (strain ATCC 25618 / H37Rv).